A 533-amino-acid chain; its full sequence is Probable dolichyl pyrophosphate Man9GlcNAc2 alpha-1,3-glucosyltransferase (533 aa).

The disordered stretch occupies residues 1 to 20 (MPKKKPAKHSGEDDITIPVS). 9 helical membrane passes run 42-64 (FLCI…YSGA), 149-169 (WTVL…FVLV), 184-204 (WHIA…GHFQ), 214-234 (VGAI…LFSL), 264-284 (ILSV…FWWP), 360-380 (GFLY…FQVH), 422-442 (LLIP…SPGN), 463-483 (VFLL…YLTI), and 491-511 (FLFE…FAFY).

This sequence belongs to the ALG6/ALG8 glucosyltransferase family.

The protein localises to the endoplasmic reticulum membrane. It carries out the reaction an alpha-D-Man-(1-&gt;2)-alpha-D-Man-(1-&gt;2)-alpha-D-Man-(1-&gt;3)-[alpha-D-Man-(1-&gt;2)-alpha-D-Man-(1-&gt;3)-[alpha-D-Man-(1-&gt;2)-alpha-D-Man-(1-&gt;6)]-alpha-D-Man-(1-&gt;6)]-beta-D-Man-(1-&gt;4)-beta-D-GlcNAc-(1-&gt;4)-alpha-D-GlcNAc-diphospho-di-trans,poly-cis-dolichol + a di-trans,poly-cis-dolichyl beta-D-glucosyl phosphate = an alpha-D-Glc-(1-&gt;3)-alpha-D-Man-(1-&gt;2)-alpha-D-Man-(1-&gt;2)-alpha-D-Man-(1-&gt;3)-[alpha-D-Man-(1-&gt;2)-alpha-D-Man-(1-&gt;3)-[alpha-D-Man-(1-&gt;2)-alpha-D-Man-(1-&gt;6)]-alpha-D-Man-(1-&gt;6)]-beta-D-Man-(1-&gt;4)-beta-D-GlcNAc-(1-&gt;4)-alpha-D-GlcNAc-diphospho-di-trans,poly-cis-dolichol + a di-trans,poly-cis-dolichyl phosphate + H(+). It functions in the pathway protein modification; protein glycosylation. Its function is as follows. Adds the first glucose residue to the lipid-linked oligosaccharide precursor for N-linked glycosylation. Transfers glucose from dolichyl phosphate glucose (Dol-P-Glc) onto the lipid-linked oligosaccharide Man(9)GlcNAc(2)-PP-Dol. In Arabidopsis thaliana (Mouse-ear cress), this protein is Probable dolichyl pyrophosphate Man9GlcNAc2 alpha-1,3-glucosyltransferase.